Here is a 197-residue protein sequence, read N- to C-terminus: Potassium-transporting ATPase KdpC subunit (197 aa).

Residues 9–29 (LVVTLLLAALLCGAYPVLVTG) form a helical membrane-spanning segment.

Belongs to the KdpC family. In terms of assembly, the system is composed of three essential subunits: KdpA, KdpB and KdpC.

The protein resides in the cell inner membrane. In terms of biological role, part of the high-affinity ATP-driven potassium transport (or Kdp) system, which catalyzes the hydrolysis of ATP coupled with the electrogenic transport of potassium into the cytoplasm. This subunit acts as a catalytic chaperone that increases the ATP-binding affinity of the ATP-hydrolyzing subunit KdpB by the formation of a transient KdpB/KdpC/ATP ternary complex. This Nitratidesulfovibrio vulgaris (strain DSM 19637 / Miyazaki F) (Desulfovibrio vulgaris) protein is Potassium-transporting ATPase KdpC subunit.